Reading from the N-terminus, the 221-residue chain is Sentrin-specific protease 8 (221 aa).

Position 1 is an N-acetylmethionine (methionine 1). Residues 11–174 form a protease region; it reads SLLRQSDVSL…MYVICNTEAL (164 aa). Catalysis depends on residues histidine 102 and aspartate 119. The active-site Nucleophile is cysteine 163.

It belongs to the peptidase C48 family.

Functionally, protease that catalyzes two essential functions in the NEDD8 pathway: processing of full-length NEDD8 to its mature form and deconjugation of NEDD8 from targeted proteins such as cullins or p53. In Mus musculus (Mouse), this protein is Sentrin-specific protease 8 (Senp8).